Reading from the N-terminus, the 446-residue chain is GTPase Der (446 aa).

EngA-type G domains lie at 3-167 (PVLA…AFDE) and 180-353 (IRLA…ASAT). Residues 9–16 (GRPNVGKS), 56–60 (DTGGF), 119–122 (NKAE), 186–193 (GRPNVGKS), 233–237 (DTAGL), and 298–301 (NKWD) contribute to the GTP site. A KH-like domain is found at 354–438 (KKLATPVLTR…PMRIEMKSSR (85 aa)).

Belongs to the TRAFAC class TrmE-Era-EngA-EngB-Septin-like GTPase superfamily. EngA (Der) GTPase family. In terms of assembly, associates with the 50S ribosomal subunit.

In terms of biological role, GTPase that plays an essential role in the late steps of ribosome biogenesis. This Methylibium petroleiphilum (strain ATCC BAA-1232 / LMG 22953 / PM1) protein is GTPase Der.